Consider the following 354-residue polypeptide: Long form salivary protein D7L3 (354 aa).

Residues 1–26 (MQLTPRSVHLVHLLLAATTLISPSWS) form the signal peptide.

Belongs to the PBP/GOBP family.

It is found in the secreted. Modulates blood feeding of female mosquitoes on vertebrate species by binding and sequestering different mediators involved in the host response. Binds serotonin with high affinity. Binds weakly noradrenaline and histamine. Does not bind tryptamine, octopamine, dopamine, adrenaline, leukotriene C4, leukotriene D4, leukotriene B4, ADP and U-46619, a stable analog of thromboxane A2. Inhibits agonist-induced platelet aggregation. Exhibits vasodilating activity. The protein is Long form salivary protein D7L3 of Anopheles gambiae (African malaria mosquito).